Here is a 429-residue protein sequence, read N- to C-terminus: Probable M18 family aminopeptidase 2 (429 aa).

Zn(2+) contacts are provided by His-82, His-156, and His-401.

The protein belongs to the peptidase M18 family. It depends on Zn(2+) as a cofactor.

This is Probable M18 family aminopeptidase 2 from Pseudomonas syringae pv. tomato (strain ATCC BAA-871 / DC3000).